The chain runs to 239 residues: Ribonuclease PH (239 aa).

Phosphate-binding positions include R86 and 124 to 126; that span reads GTR.

The protein belongs to the RNase PH family. In terms of assembly, homohexameric ring arranged as a trimer of dimers.

It carries out the reaction tRNA(n+1) + phosphate = tRNA(n) + a ribonucleoside 5'-diphosphate. Functionally, phosphorolytic 3'-5' exoribonuclease that plays an important role in tRNA 3'-end maturation. Removes nucleotide residues following the 3'-CCA terminus of tRNAs; can also add nucleotides to the ends of RNA molecules by using nucleoside diphosphates as substrates, but this may not be physiologically important. Probably plays a role in initiation of 16S rRNA degradation (leading to ribosome degradation) during starvation. This is Ribonuclease PH from Rhizobium leguminosarum bv. trifolii (strain WSM2304).